A 164-amino-acid polypeptide reads, in one-letter code: Large ribosomal subunit protein eL24 (164 aa).

Disordered regions lie at residues 63–82 and 117–164; these read KDAA…KPYS and ERIK…GGKA. Over residues 71–81 the composition is skewed to basic residues; sequence KKRRRATKKPY. Over residues 117-133 the composition is skewed to basic and acidic residues; that stretch reads ERIKKTKDEKKAKKAEV.

This sequence belongs to the eukaryotic ribosomal protein eL24 family.

The protein localises to the cytoplasm. The chain is Large ribosomal subunit protein eL24 (RPL24) from Cicer arietinum (Chickpea).